The chain runs to 295 residues: Cell shape-determining protein MreC (295 aa).

The N-terminal stretch at 1 to 34 (MPQFFLNKRLIILLISIIVLVALVGFSLRDRENA) is a signal peptide. A coiled-coil region spans residues 66 to 112 (VVDLKNTYTENQHLKERLEELAQLESEVADLKKENKDLKESLDITDS). Residues 276–295 (SAEAGTTDDDTTSSDTTGGQ) are disordered.

This sequence belongs to the MreC family. As to quaternary structure, homooligomer of 24 subunits, arranged as 12 dimers.

In terms of biological role, involved in formation and maintenance of cell shape. This is Cell shape-determining protein MreC from Listeria monocytogenes serovar 1/2a (strain ATCC BAA-679 / EGD-e).